The chain runs to 216 residues: Inner membrane assembly complex subunit 22 (216 aa).

The N-terminal 26 residues, 1 to 26, are a transit peptide targeting the mitochondrion; sequence MFMARQVLRNGLFLRSLAPIKITART. Residues 27-43 lie on the Mitochondrial matrix side of the membrane; the sequence is VASANAGIKRKSRFDKT. Residues 44–63 traverse the membrane as a helical segment; it reads MIKPLLLVMIFGSILNAVIA. Residues 64 to 93 adopt a coiled-coil conformation; sequence EKRNIIDMERKYKLKLDKLKELIRRVHDNN. The Mitochondrial intermembrane segment spans residues 64–216; the sequence is EKRNIIDMER…KEHDKIPKFL (153 aa).

Component of the inner membrane assembly (INA) complex, composed of INA17 and INA22. Interacts with a subset of F(1)F(0)-ATP synthase subunits of the F(1)-domain and the peripheral stalk.

Its subcellular location is the mitochondrion inner membrane. Its function is as follows. Component of the INA complex (INAC) that promotes the biogenesis of mitochondrial F(1)F(0)-ATP synthase. INAC facilitates the assembly of the peripheral stalk and promotes the assembly of the catalytic F(1)-domain with the membrane-embedded F(0)-domain. In Saccharomyces cerevisiae (strain ATCC 204508 / S288c) (Baker's yeast), this protein is Inner membrane assembly complex subunit 22.